The primary structure comprises 101 residues: Iron-sulfur cluster assembly protein CyaY (101 aa).

The protein belongs to the frataxin family.

Functionally, involved in iron-sulfur (Fe-S) cluster assembly. May act as a regulator of Fe-S biogenesis. The chain is Iron-sulfur cluster assembly protein CyaY from Haemophilus influenzae (strain 86-028NP).